A 402-amino-acid chain; its full sequence is Secreted RxLR effector protein 73 (402 aa).

The first 23 residues, 1 to 23 (MRLLHVVVATVSLTGAITSLIAA), serve as a signal peptide directing secretion. A glycan (N-linked (GlcNAc...) asparagine) is linked at Asn27. Residues 104–107 (RVLR) carry the RxLR motif. N-linked (GlcNAc...) asparagine glycosylation is found at Asn111, Asn134, Asn143, Asn165, and Asn286.

It belongs to the RxLR effector family.

It localises to the secreted. The protein localises to the host cell. Functionally, secreted effector that completely suppresses the host cell death induced by cell death-inducing proteins. The chain is Secreted RxLR effector protein 73 from Plasmopara viticola (Downy mildew of grapevine).